Reading from the N-terminus, the 450-residue chain is 23S rRNA (uracil(1939)-C(5))-methyltransferase RlmD (450 aa).

[4Fe-4S] cluster contacts are provided by Cys-81, Cys-87, Cys-90, and Cys-173. S-adenosyl-L-methionine is bound by residues Gln-276, Phe-305, Asn-310, Glu-326, Asp-353, and Asp-372. The active-site Nucleophile is the Cys-402.

This sequence belongs to the class I-like SAM-binding methyltransferase superfamily. RNA M5U methyltransferase family. RlmD subfamily.

It catalyses the reaction uridine(1939) in 23S rRNA + S-adenosyl-L-methionine = 5-methyluridine(1939) in 23S rRNA + S-adenosyl-L-homocysteine + H(+). Functionally, catalyzes the formation of 5-methyl-uridine at position 1939 (m5U1939) in 23S rRNA. The sequence is that of 23S rRNA (uracil(1939)-C(5))-methyltransferase RlmD from Idiomarina loihiensis (strain ATCC BAA-735 / DSM 15497 / L2-TR).